Consider the following 980-residue polypeptide: Ankycorbin (980 aa).

An N-acetylmethionine modification is found at methionine 1. Position 11 is a phosphoserine (serine 11). 7 ANK repeats span residues 18–51 (KNDD…KHDS), 52–81 (EGKT…DVTA), 85–114 (TGHS…PAES), 118–147 (SGKT…PINL), 151–180 (DGNI…DVNS), 184–213 (SGRT…DLNL), and 217–247 (LGYN…DADL). Positions 247–259 (LKTPTKPKQHDQV) are enriched in basic and acidic residues. A disordered region spans residues 247-301 (LKTPTKPKQHDQVSKISSERSGTPKKRKAPPPPISPTQLSDVSSPRSITSTPLSG). At threonine 249 the chain carries Phosphothreonine. The short motif at 270 to 276 (PKKRKAP) is the Nuclear localization signal element. 3 positions are modified to phosphoserine: serine 281, serine 286, and serine 293. Residues 282–299 (PTQLSDVSSPRSITSTPL) are compositionally biased toward polar residues. Threonine 295 and threonine 297 each carry phosphothreonine. Phosphoserine occurs at positions 300, 304, 318, 327, 329, 340, 341, 350, 358, 419, 512, 515, 667, and 915. Residues 349–374 (LSLLQAKVASLTLHNKELQDKLQAKS) adopt a coiled-coil conformation. The interval 387-423 (YHSTQTDLGPSLGKPGETSPPDSKSSPSVLIHSLGKS) is disordered. The stretch at 425–947 (TDNDVRIQQL…QHQEVISVYR (523 aa)) forms a coiled coil.

Interacts with PALLD. Associates with actin. However, does not bind F-actin directly. As to expression, highly expressed in placenta, muscle, kidney and testis. Moderately expressed in heart, brain, lung, liver and intestine. Isoform 2 is widely expressed and expressed in fetal and adult testes, and spermatozoa.

The protein resides in the cytoplasm. It is found in the cytoskeleton. Its subcellular location is the stress fiber. It localises to the cell cortex. The protein localises to the cell junction. The protein resides in the nucleus. Functionally, plays a role in actin regulation at the ectoplasmic specialization, a type of cell junction specific to testis. Important for establishment of sperm polarity and normal spermatid adhesion. May also promote integrity of Sertoli cell tight junctions at the blood-testis barrier. The protein is Ankycorbin (RAI14) of Homo sapiens (Human).